The following is a 179-amino-acid chain: Translation initiation factor IF-3 (179 aa).

This sequence belongs to the IF-3 family. As to quaternary structure, monomer.

It is found in the cytoplasm. Its function is as follows. IF-3 binds to the 30S ribosomal subunit and shifts the equilibrium between 70S ribosomes and their 50S and 30S subunits in favor of the free subunits, thus enhancing the availability of 30S subunits on which protein synthesis initiation begins. The chain is Translation initiation factor IF-3 from Proteus hauseri.